Reading from the N-terminus, the 118-residue chain is Basic phospholipase A2 nigroxin B (118 aa).

Intrachain disulfides connect cysteine 11–cysteine 70, cysteine 25–cysteine 117, cysteine 27–cysteine 43, cysteine 42–cysteine 98, cysteine 49–cysteine 91, cysteine 59–cysteine 84, and cysteine 77–cysteine 89. 3 residues coordinate Ca(2+): tyrosine 26, glycine 28, and glycine 30. The active site involves histidine 46. Aspartate 47 contacts Ca(2+). Aspartate 92 is a catalytic residue.

This sequence belongs to the phospholipase A2 family. Group I subfamily. D49 sub-subfamily. Ca(2+) is required as a cofactor. Expressed by the venom gland.

It is found in the secreted. The enzyme catalyses a 1,2-diacyl-sn-glycero-3-phosphocholine + H2O = a 1-acyl-sn-glycero-3-phosphocholine + a fatty acid + H(+). Its function is as follows. Snake venom phospholipase A2 (PLA2) that has only a weak enzymatic activity. It has a myotoxic activity in vivo (dystrophic effect). PLA2 catalyzes the calcium-dependent hydrolysis of the 2-acyl groups in 3-sn-phosphoglycerides. The polypeptide is Basic phospholipase A2 nigroxin B (Micrurus nigrocinctus (Central American coral snake)).